Reading from the N-terminus, the 326-residue chain is Pyruvate dehydrogenase E1 component subunit beta (326 aa).

Position 59 (E59) interacts with thiamine diphosphate.

In terms of assembly, heterodimer of an alpha and a beta chain. Thiamine diphosphate is required as a cofactor.

It carries out the reaction N(6)-[(R)-lipoyl]-L-lysyl-[protein] + pyruvate + H(+) = N(6)-[(R)-S(8)-acetyldihydrolipoyl]-L-lysyl-[protein] + CO2. In terms of biological role, the pyruvate dehydrogenase complex catalyzes the overall conversion of pyruvate to acetyl-CoA and CO(2). It contains multiple copies of three enzymatic components: pyruvate dehydrogenase (E1), dihydrolipoamide acetyltransferase (E2) and lipoamide dehydrogenase (E3). This chain is Pyruvate dehydrogenase E1 component subunit beta (pdhB), found in Rickettsia conorii (strain ATCC VR-613 / Malish 7).